A 223-amino-acid polypeptide reads, in one-letter code: Adenine phosphoribosyltransferase (223 aa).

Belongs to the purine/pyrimidine phosphoribosyltransferase family. Homodimer.

The protein localises to the cytoplasm. It carries out the reaction AMP + diphosphate = 5-phospho-alpha-D-ribose 1-diphosphate + adenine. The protein operates within purine metabolism; AMP biosynthesis via salvage pathway; AMP from adenine: step 1/1. In terms of biological role, catalyzes a salvage reaction resulting in the formation of AMP, that is energically less costly than de novo synthesis. The sequence is that of Adenine phosphoribosyltransferase from Mycobacterium bovis (strain ATCC BAA-935 / AF2122/97).